Reading from the N-terminus, the 1441-residue chain is Envelopment polyprotein (1441 aa).

Residues 1-13 (MIRMLVLIVVTAA) form the signal peptide. Residues 14-200 (SPVYQRCFQD…GSIANSICQN (187 aa)) are Lumenal-facing. Asn57 is a glycosylation site (N-linked (GlcNAc...) asparagine; by host). The chain crosses the membrane as a helical span at residues 201 to 221 (IEIIILVTLTLLIFILLSILS). Residues 222 to 305 (KTYICYLLMP…RAARVMCKSK (84 aa)) lie on the Cytoplasmic side of the membrane. A helical transmembrane segment spans residues 306–326 (GPASILSIITAVLVLTFVTPI). Over 327 to 365 (NSMVLGESKETFELEELPDDMLEMALRINSYYFTCILNY) the chain is Lumenal. The helical transmembrane segment at 366-386 (AVSWGLIIAGLLVGLIFKKYQ) threads the bilayer. Over 387–452 (HRFLNIYAMY…LVQYKAKWMM (66 aa)) the chain is Cytoplasmic. A helical membrane pass occupies residues 453–473 (NFLIIYIFLILIKDSAIVGQA). The Lumenal segment spans residues 474–1395 (TGTDFTTCLE…EPFKNLFGSY (922 aa)). Residues Asn490 and Asn1177 are each glycosylated (N-linked (GlcNAc...) asparagine; by host). A helical membrane pass occupies residues 1396–1416 (IGIFYTFIISIIALLVIIYVL). Residues 1417 to 1441 (LPICFKLRDTLRKHDDAYKREMKIR) are Cytoplasmic-facing.

This sequence belongs to the orthobunyavirus envelope glycoprotein family. Glycoprotein C and Glycoprotein N interact with each other. Specific enzymatic cleavages in vivo yield mature proteins including nonstructural protein NSm, glycoprotein C, and glycoprotein N.

The protein resides in the virion membrane. The protein localises to the host Golgi apparatus membrane. Its subcellular location is the host endoplasmic reticulum membrane. Functionally, glycoprotein C and Glycoprotein N interact with each other and are present at the surface of the virion. They are able to attach the virion to a cell receptor and to promote fusion of membranes after endocytosis of the virion. In Bunyavirus La Crosse, this protein is Envelopment polyprotein (GP).